Here is a 591-residue protein sequence, read N- to C-terminus: NADH-quinone oxidoreductase subunit C/D (591 aa).

Residues 1–182 form an NADH dehydrogenase I subunit C region; sequence MVTVVENIDP…TPYFLNTAKQ (182 aa). The interval 206–591 is NADH dehydrogenase I subunit D; that stretch reads DFMFLNIGPN…IDVVMADCDR (386 aa).

This sequence in the N-terminal section; belongs to the complex I 30 kDa subunit family. In the C-terminal section; belongs to the complex I 49 kDa subunit family. NDH-1 is composed of 13 different subunits. Subunits NuoB, CD, E, F, and G constitute the peripheral sector of the complex.

Its subcellular location is the cell inner membrane. The catalysed reaction is a quinone + NADH + 5 H(+)(in) = a quinol + NAD(+) + 4 H(+)(out). Its function is as follows. NDH-1 shuttles electrons from NADH, via FMN and iron-sulfur (Fe-S) centers, to quinones in the respiratory chain. The immediate electron acceptor for the enzyme in this species is believed to be ubiquinone. Couples the redox reaction to proton translocation (for every two electrons transferred, four hydrogen ions are translocated across the cytoplasmic membrane), and thus conserves the redox energy in a proton gradient. In Psychrobacter arcticus (strain DSM 17307 / VKM B-2377 / 273-4), this protein is NADH-quinone oxidoreductase subunit C/D.